A 480-amino-acid polypeptide reads, in one-letter code: RAC-alpha serine/threonine-protein kinase (480 aa).

The 104-residue stretch at 5 to 108 folds into the PH domain; sequence AIVKEGWLHK…WATAIQTVAD (104 aa). N6-acetyllysine is present on residues lysine 14 and lysine 20. 14–19 is a 1D-myo-inositol 1,3,4,5-tetrakisphosphate binding site; sequence KRGEYI. 1D-myo-inositol 1,3,4,5-tetrakisphosphate contacts are provided by residues 23-25 and asparagine 53; that span reads RPR. A disulfide bridge links cysteine 60 with cysteine 77. Residue arginine 86 participates in 1D-myo-inositol 1,3,4,5-tetrakisphosphate binding. Positions 114 to 137 are disordered; it reads EEETMDFRSGSPSDNSGAEEMEVS. Residue serine 124 is modified to Phosphoserine. 2 positions are modified to phosphoserine; alternate: serine 126 and serine 129. O-linked (GlcNAc) serine; alternate glycosylation is found at serine 126 and serine 129. One can recognise a Protein kinase domain in the interval 150–408; the sequence is FEYLKLLGKG…AKEIMQHRFF (259 aa). 156 to 164 serves as a coordination point for ATP; sequence LGKGTFGKV. At tyrosine 176 the chain carries Phosphotyrosine; by TNK2. Lysine 179 is a binding site for ATP. Catalysis depends on aspartate 274, which acts as the Proton acceptor. Lysine 284 participates in a covalent cross-link: Glycyl lysine isopeptide (Lys-Gly) (interchain with G-Cter in ubiquitin). Cysteine 296 and cysteine 310 are disulfide-bonded. Threonine 305 carries O-linked (GlcNAc) threonine glycosylation. Threonine 308 carries the post-translational modification Phosphothreonine; by IKKE, PDPK1 and TBK1. Threonine 312 is a glycosylation site (O-linked (GlcNAc) threonine). An AGC-kinase C-terminal domain is found at 409-480; the sequence is ANIVWQDVYE…QFSYSASGTA (72 aa). Threonine 448 carries the post-translational modification Phosphothreonine. Threonine 450 carries the phosphothreonine; by MTOR modification. A disordered region spans residues 450 to 480; it reads TPPDQDDSMECVDSERRPHFPQFSYSASGTA. The O-linked (GlcNAc) serine; alternate glycan is linked to serine 473. Residue serine 473 is modified to Phosphoserine; by IKKE, MTOR, PRKDC and TBK1; alternate. Position 474 is a phosphotyrosine (tyrosine 474). Serine 477 is subject to Phosphoserine; by CDK2 and MTOR. The residue at position 479 (threonine 479) is a Phosphothreonine; by CDK2 and MTOR.

It belongs to the protein kinase superfamily. AGC Ser/Thr protein kinase family. RAC subfamily. Interacts with and phosphorylated by PDPK1. Interacts with AGAP2 (isoform 2/PIKE-A); the interaction occurs in the presence of guanine nucleotides. Interacts with AKTIP. Interacts (via PH domain) with MTCP1, TCL1A and TCL1B. Interacts with CDKN1B; the interaction phosphorylates CDKN1B promoting 14-3-3 binding and cell-cycle progression. Interacts with MAP3K5 and TRAF6. Interacts with BAD, PPP2R5B, STK3 and STK4. Interacts (via PH domain) with SIRT1. Interacts with SRPK2 in a phosphorylation-dependent manner. Interacts with TRIM13; the interaction ubiquitinates AKT1 leading to its proteasomal degradation. Interacts with RAF1. Interacts (via the C-terminus) with CCDC88A (via its C-terminus) and THEM4 (via its C-terminus). Interacts with GRB10; the interaction leads to GRB10 phosphorylation thus promoting YWHAE-binding. Interacts with KCTD20. Interacts with BTBD10. Interacts with PA2G4. Interacts with KIF14; the interaction is detected in the plasma membrane upon INS stimulation and promotes AKT1 phosphorylation. Interacts with FAM83B; activates the PI3K/AKT signaling cascade. Interacts with WDFY2 (via WD repeats 1-3). Forms a complex with WDFY2 and FOXO1. Interacts with FAM168A. Interacts with SYAP1 (via phosphorylated form and BSD domain); this interaction is enhanced in a mTORC2-mediated manner in response to epidermal growth factor (EGF) stimulation and activates AKT1. Interacts with PKHM3. Interacts with FKBP5/FKBP51; promoting interaction between Akt/AKT1 and PHLPP1, thereby enhancing dephosphorylation and subsequent activation of Akt/AKT1. Interacts with TMEM175; leading to formation of the lysoK(GF) complex. O-GlcNAcylation at Thr-305 and Thr-312 inhibits activating phosphorylation at Thr-308 via disrupting the interaction between AKT1 and PDPK1. O-GlcNAcylation at Ser-473 also probably interferes with phosphorylation at this site. Post-translationally, phosphorylation on Thr-308, Ser-473 and Tyr-474 is required for full activity. Phosphorylation of the activation loop at Thr-308 by PDPK1/PDK1 is a prerequisite for full activation. Phosphorylation by mTORC2 in response to growth factors plays a key role in AKT1 activation: mTORC2 phosphorylates different sites depending on the context, such as Thr-450, Ser-473, Ser-477 or Thr-479, thereby facilitating subsequent phosphorylation of the activation loop by PDPK1/PDK1. Phosphorylation at Ser-473 by mTORC2 promotes ubiquitination and degradation by the proteasome. Also phosphorylated at Ser-477 and Thr-479 by CDK2, facilitating subsequent phosphorylation of the activation loop by PDPK1/PDK1. Activated TNK2 phosphorylates it on Tyr-176 resulting in its binding to the anionic plasma membrane phospholipid PA. This phosphorylated form localizes to the cell membrane, where it is targeted by PDPK1 and PDPK2 for further phosphorylations on Thr-308 and Ser-473 leading to its activation. Phosphorylated at Thr-308 and Ser-473 by IKBKE and TBK1. Ser-473 phosphorylation is enhanced by interaction with AGAP2 isoform 2 (PIKE-A). Ser-473 phosphorylation is enhanced by signaling through activated FLT3. Ser-473 is dephosphorylated by PHLPP. Dephosphorylated at Thr-308 and Ser-473 by PP2A phosphatase. The phosphorylated form of PPP2R5B is required for bridging AKT1 with PP2A phosphatase. Ser-473 is dephosphorylated by CPPED1, leading to termination of signaling. AIM2 acts as an inhibitor of AKT1 by inhibiting phosphorylation Ser-473: AIM2 acts both by inhibiting the activity of PRKDC/DNA-PK kinase and promoting dephosphorylation by PP2A phosphatase. In terms of processing, ubiquitinated; undergoes both 'Lys-48'- and 'Lys-63'-linked polyubiquitination. TRAF6-induced 'Lys-63'-linked AKT1 ubiquitination is critical for phosphorylation and activation. When ubiquitinated, it translocates to the plasma membrane, where it becomes phosphorylated. When fully phosphorylated and translocated into the nucleus, undergoes 'Lys-48'-polyubiquitination catalyzed by TTC3, leading to its degradation by the proteasome. Also ubiquitinated by TRIM13 leading to its proteasomal degradation. Ubiquitinated via 'Lys-48'-linked polyubiquitination by ZNRF1, leading to its degradation by the proteasome. Phosphorylated, undergoes 'Lys-48'-linked polyubiquitination preferentially at Lys-284 catalyzed by MUL1, leading to its proteasomal degradation. Acetylated on Lys-14 and Lys-20 by the histone acetyltransferases EP300 and KAT2B. Acetylation results in reduced phosphorylation and inhibition of activity. Deacetylated at Lys-14 and Lys-20 by SIRT1. SIRT1-mediated deacetylation relieves the inhibition. Post-translationally, cleavage by caspase-3/CASP3. Cleaved at the caspase-3 consensus site Asp-462 during apoptosis, resulting in down-regulation of the AKT signaling pathway and decreased cell survival. Widely expressed. Low levels found in liver with slightly higher levels present in thymus and testis.

It localises to the cytoplasm. The protein localises to the nucleus. The protein resides in the cell membrane. Its subcellular location is the mitochondrion intermembrane space. The enzyme catalyses L-seryl-[protein] + ATP = O-phospho-L-seryl-[protein] + ADP + H(+). It catalyses the reaction L-threonyl-[protein] + ATP = O-phospho-L-threonyl-[protein] + ADP + H(+). Three specific sites, one in the kinase domain (Thr-308) and the two other ones in the C-terminal regulatory region (Ser-473 and Tyr-474), need to be phosphorylated for its full activation. AKT1 is one of 3 closely related serine/threonine-protein kinases (AKT1, AKT2 and AKT3) called the AKT kinase, and which regulate many processes including metabolism, proliferation, cell survival, growth and angiogenesis. This is mediated through serine and/or threonine phosphorylation of a range of downstream substrates. Over 100 substrate candidates have been reported so far, but for most of them, no isoform specificity has been reported. AKT is responsible of the regulation of glucose uptake by mediating insulin-induced translocation of the SLC2A4/GLUT4 glucose transporter to the cell surface. Phosphorylation of PTPN1 at 'Ser-50' negatively modulates its phosphatase activity preventing dephosphorylation of the insulin receptor and the attenuation of insulin signaling. Phosphorylation of TBC1D4 triggers the binding of this effector to inhibitory 14-3-3 proteins, which is required for insulin-stimulated glucose transport. AKT also regulates the storage of glucose in the form of glycogen by phosphorylating GSK3A at 'Ser-21' and GSK3B at 'Ser-9', resulting in inhibition of its kinase activity. Phosphorylation of GSK3 isoforms by AKT is also thought to be one mechanism by which cell proliferation is driven. AKT also regulates cell survival via the phosphorylation of MAP3K5 (apoptosis signal-related kinase). Phosphorylation of 'Ser-83' decreases MAP3K5 kinase activity stimulated by oxidative stress and thereby prevents apoptosis. AKT mediates insulin-stimulated protein synthesis by phosphorylating TSC2 at 'Ser-939' and 'Thr-1462', thereby activating the mTORC1 signaling pathway, and leading to both phosphorylation of 4E-BP1 and in activation of RPS6KB1. Also regulates the mTORC1 signaling pathway by catalyzing phosphorylation of CASTOR1 and DEPDC5. AKT plays a role as key modulator of the AKT-mTOR signaling pathway controlling the tempo of the process of newborn neurons integration during adult neurogenesis, including correct neuron positioning, dendritic development and synapse formation. Part of a positive feedback loop of mTORC2 signaling by mediating phosphorylation of MAPKAP1/SIN1, promoting mTORC2 activation. AKT is involved in the phosphorylation of members of the FOXO factors (Forkhead family of transcription factors), leading to binding of 14-3-3 proteins and cytoplasmic localization. In particular, FOXO1 is phosphorylated at 'Thr-24', 'Ser-256' and 'Ser-319'. FOXO3 and FOXO4 are phosphorylated on equivalent sites. AKT has an important role in the regulation of NF-kappa-B-dependent gene transcription and positively regulates the activity of CREB1 (cyclic AMP (cAMP)-response element binding protein). The phosphorylation of CREB1 induces the binding of accessory proteins that are necessary for the transcription of pro-survival genes such as BCL2 and MCL1. AKT phosphorylates 'Ser-454' on ATP citrate lyase (ACLY), thereby potentially regulating ACLY activity and fatty acid synthesis. Activates the 3B isoform of cyclic nucleotide phosphodiesterase (PDE3B) via phosphorylation of 'Ser-273', resulting in reduced cyclic AMP levels and inhibition of lipolysis. Phosphorylates PIKFYVE on 'Ser-318', which results in increased PI(3)P-5 activity. The Rho GTPase-activating protein DLC1 is another substrate and its phosphorylation is implicated in the regulation cell proliferation and cell growth. Signals downstream of phosphatidylinositol 3-kinase (PI(3)K) to mediate the effects of various growth factors such as platelet-derived growth factor (PDGF), epidermal growth factor (EGF), insulin and insulin-like growth factor 1 (IGF1). AKT mediates the antiapoptotic effects of IGF1. Essential for the SPATA13-mediated regulation of cell migration and adhesion assembly and disassembly. May be involved in the regulation of the placental development. Phosphorylates STK4/MST1 at 'Thr-120' and 'Thr-387' leading to inhibition of its: kinase activity, nuclear translocation, autophosphorylation and ability to phosphorylate FOXO3. Phosphorylates STK3/MST2 at 'Thr-117' and 'Thr-384' leading to inhibition of its: cleavage, kinase activity, autophosphorylation at Thr-180, binding to RASSF1 and nuclear translocation. Phosphorylates SRPK2 and enhances its kinase activity towards SRSF2 and ACIN1 and promotes its nuclear translocation. Phosphorylates RAF1 at 'Ser-259' and negatively regulates its activity. Phosphorylation of BAD stimulates its pro-apoptotic activity. Phosphorylates KAT6A at 'Thr-369' and this phosphorylation inhibits the interaction of KAT6A with PML and negatively regulates its acetylation activity towards p53/TP53. Phosphorylates palladin (PALLD), modulating cytoskeletal organization and cell motility. Phosphorylates prohibitin (PHB), playing an important role in cell metabolism and proliferation. Phosphorylates CDKN1A, for which phosphorylation at 'Thr-145' induces its release from CDK2 and cytoplasmic relocalization. These recent findings indicate that the AKT1 isoform has a more specific role in cell motility and proliferation. Phosphorylates CLK2 thereby controlling cell survival to ionizing radiation. Phosphorylates PCK1 at 'Ser-90', reducing the binding affinity of PCK1 to oxaloacetate and changing PCK1 into an atypical protein kinase activity using GTP as donor. Also acts as an activator of TMEM175 potassium channel activity in response to growth factors: forms the lysoK(GF) complex together with TMEM175 and acts by promoting TMEM175 channel activation, independently of its protein kinase activity. Acts as a negative regulator of the cGAS-STING pathway by mediating phosphorylation of CGAS during mitosis, leading to its inhibition. Acts as a regulator of mitochondrial calcium uptake by mediating phosphorylation of MICU1 in the mitochondrial intermembrane space, impairing MICU1 maturation. Acts as an inhibitor of tRNA methylation by mediating phosphorylation of the N-terminus of METTL1, thereby inhibiting METTL1 methyltransferase activity. In response to LPAR1 receptor pathway activation, phosphorylates Rabin8/RAB3IP which alters its activity and phosphorylates WDR44 which induces WDR44 binding to Rab11, thereby switching Rab11 vesicular function from preciliary trafficking to endocytic recycling. The chain is RAC-alpha serine/threonine-protein kinase (Akt1) from Mus musculus (Mouse).